The sequence spans 344 residues: UDP-3-O-acylglucosamine N-acyltransferase (344 aa).

His-248 serves as the catalytic Proton acceptor.

It belongs to the transferase hexapeptide repeat family. LpxD subfamily. In terms of assembly, homotrimer.

It catalyses the reaction a UDP-3-O-[(3R)-3-hydroxyacyl]-alpha-D-glucosamine + a (3R)-hydroxyacyl-[ACP] = a UDP-2-N,3-O-bis[(3R)-3-hydroxyacyl]-alpha-D-glucosamine + holo-[ACP] + H(+). The protein operates within bacterial outer membrane biogenesis; LPS lipid A biosynthesis. Functionally, catalyzes the N-acylation of UDP-3-O-acylglucosamine using 3-hydroxyacyl-ACP as the acyl donor. Is involved in the biosynthesis of lipid A, a phosphorylated glycolipid that anchors the lipopolysaccharide to the outer membrane of the cell. This is UDP-3-O-acylglucosamine N-acyltransferase from Synechocystis sp. (strain ATCC 27184 / PCC 6803 / Kazusa).